The following is a 247-amino-acid chain: Protein GrpE (247 aa).

The segment covering glutamine 31 to valine 49 has biased composition (basic and acidic residues). The tract at residues glutamine 31–histidine 79 is disordered. Low complexity predominate over residues lysine 50–lysine 68.

The protein belongs to the GrpE family. In terms of assembly, homodimer.

The protein resides in the cytoplasm. Participates actively in the response to hyperosmotic and heat shock by preventing the aggregation of stress-denatured proteins, in association with DnaK and GrpE. It is the nucleotide exchange factor for DnaK and may function as a thermosensor. Unfolded proteins bind initially to DnaJ; upon interaction with the DnaJ-bound protein, DnaK hydrolyzes its bound ATP, resulting in the formation of a stable complex. GrpE releases ADP from DnaK; ATP binding to DnaK triggers the release of the substrate protein, thus completing the reaction cycle. Several rounds of ATP-dependent interactions between DnaJ, DnaK and GrpE are required for fully efficient folding. This Onion yellows phytoplasma (strain OY-M) protein is Protein GrpE.